Consider the following 361-residue polypeptide: Trans-enoyl reductase gkaC (361 aa).

An Enoyl reductase (ER) domain is found at Glu-15 to Val-357. NADP(+) contacts are provided by residues Cys-48–Lys-51, Ser-172–Ser-175, Ser-195–Asn-198, Tyr-213, Phe-260–Glu-261, and Ile-351–Ser-352.

This sequence belongs to the zinc-containing alcohol dehydrogenase family. As to quaternary structure, monomer.

It participates in mycotoxin biosynthesis. Functionally, trans-enoyl reductasee; part of the gene cluster that mediates the biosynthesis of GKK1032, fungal natural products containing a macrocyclic para-cyclophane connected to a decahydrofluorene ring system that show potent antitumor activities. Within the pathway, the PKS-NRPS gkaA, with the help of the trans-enoyl reductase gkaC, synthesize the polyketide-tyrosyl acyl thioester product which can be reductively off-loaded by the terminal reductase (R) domain in gkaA. The PKS module of gkaA acts in combination with the trans-acting enoyl reductase gkaC to produce a methylated polyketide attached to the ACP domain. In parallel, the adenylation (A) domain of the NRPS module activated L-tyrosine, which is then transferred to the ACP domain. The condensation (C) domain subsequently links this group to the polyketide chain, forming an enzyme-bound amide. The alpha/beta hydrolase gkaG is then required to catalyze the subsequent Knoevenagel condensation that affords the 3-pyrrolin-2-one ring, whereas the three proteins gkaB, gkadX and gkaZ then function synergistically to form the cyclophane. The sequence is that of Trans-enoyl reductase gkaC from Penicillium citrinum.